Consider the following 179-residue polypeptide: ATP synthase subunit delta (179 aa).

The protein belongs to the ATPase delta chain family. As to quaternary structure, F-type ATPases have 2 components, F(1) - the catalytic core - and F(0) - the membrane proton channel. F(1) has five subunits: alpha(3), beta(3), gamma(1), delta(1), epsilon(1). F(0) has three main subunits: a(1), b(2) and c(10-14). The alpha and beta chains form an alternating ring which encloses part of the gamma chain. F(1) is attached to F(0) by a central stalk formed by the gamma and epsilon chains, while a peripheral stalk is formed by the delta and b chains.

It is found in the cell membrane. In terms of biological role, f(1)F(0) ATP synthase produces ATP from ADP in the presence of a proton or sodium gradient. F-type ATPases consist of two structural domains, F(1) containing the extramembraneous catalytic core and F(0) containing the membrane proton channel, linked together by a central stalk and a peripheral stalk. During catalysis, ATP synthesis in the catalytic domain of F(1) is coupled via a rotary mechanism of the central stalk subunits to proton translocation. Its function is as follows. This protein is part of the stalk that links CF(0) to CF(1). It either transmits conformational changes from CF(0) to CF(1) or is implicated in proton conduction. In Staphylococcus aureus (strain bovine RF122 / ET3-1), this protein is ATP synthase subunit delta.